A 222-amino-acid polypeptide reads, in one-letter code: UPF0758 protein Ppha_0935 (222 aa).

Residues 100–222 form the MPN domain; it reads KIQAARDVFE…CFSFRESGLL (123 aa). His171, His173, and Asp184 together coordinate Zn(2+). The short motif at 171-184 is the JAMM motif element; it reads HNHPSGDVEPSNAD.

This sequence belongs to the UPF0758 family.

In Pelodictyon phaeoclathratiforme (strain DSM 5477 / BU-1), this protein is UPF0758 protein Ppha_0935.